Reading from the N-terminus, the 574-residue chain is Sulfate adenylyltransferase (574 aa).

The segment at 1-169 is N-terminal; the sequence is MANPPHGGVL…IEAINKLNHY (169 aa). The segment at 170–394 is catalytic; that stretch reads DYVALRYTPA…LRESSPPRHT (225 aa). Residue Q197 participates in sulfate binding. ATP-binding positions include 197–200 and 291–294; these read QTRN and GRDH. Active-site residues include T198, R199, and N200. Residue R199 coordinates sulfate. Residue A295 participates in sulfate binding. V333 serves as a coordination point for ATP. Residues 395-574 form an allosteric regulation domain; adenylyl-sulfate kinase-like region; sequence QGFTIFLTGY…LETEGFFDRS (180 aa). 3'-phosphoadenylyl sulfate-binding positions include 434-437, R451, 477-478, and R516; these read DTVR and IA.

The protein in the N-terminal section; belongs to the sulfate adenylyltransferase family. It in the C-terminal section; belongs to the APS kinase family. In terms of assembly, homohexamer. Dimer of trimers.

The protein localises to the cytoplasm. The enzyme catalyses sulfate + ATP + H(+) = adenosine 5'-phosphosulfate + diphosphate. The protein operates within sulfur metabolism; hydrogen sulfide biosynthesis; sulfite from sulfate: step 1/3. With respect to regulation, allosterically inhibited by 3'-phosphoadenosine 5'-phosphosulfate (PAPS). Its function is as follows. Catalyzes the first intracellular reaction of sulfate assimilation, forming adenosine-5'-phosphosulfate (APS) from inorganic sulfate and ATP. Plays an important role in sulfate activation as a component of the biosynthesis pathway of sulfur-containing amino acids. The polypeptide is Sulfate adenylyltransferase (Aspergillus fumigatus (strain ATCC MYA-4609 / CBS 101355 / FGSC A1100 / Af293) (Neosartorya fumigata)).